Reading from the N-terminus, the 106-residue chain is Cell division topological specificity factor (106 aa).

The protein belongs to the MinE family.

Functionally, prevents the cell division inhibition by proteins MinC and MinD at internal division sites while permitting inhibition at polar sites. This ensures cell division at the proper site by restricting the formation of a division septum at the midpoint of the long axis of the cell. The polypeptide is Cell division topological specificity factor (Prochlorococcus marinus (strain SARG / CCMP1375 / SS120)).